Reading from the N-terminus, the 467-residue chain is Cysteine--tRNA ligase (467 aa).

Cysteine 27 lines the Zn(2+) pocket. Positions 29-39 (PTVYNYIHIGN) match the 'HIGH' region motif. Residues cysteine 207, histidine 232, and glutamate 236 each coordinate Zn(2+). The 'KMSKS' region motif lies at 264–268 (KMSKS). Lysine 267 provides a ligand contact to ATP.

It belongs to the class-I aminoacyl-tRNA synthetase family. Monomer. Zn(2+) is required as a cofactor.

The protein localises to the cytoplasm. The enzyme catalyses tRNA(Cys) + L-cysteine + ATP = L-cysteinyl-tRNA(Cys) + AMP + diphosphate. The chain is Cysteine--tRNA ligase from Caldanaerobacter subterraneus subsp. tengcongensis (strain DSM 15242 / JCM 11007 / NBRC 100824 / MB4) (Thermoanaerobacter tengcongensis).